Consider the following 392-residue polypeptide: Probable tRNA sulfurtransferase (392 aa).

Residues 60–162 enclose the THUMP domain; that stretch reads QQVINDLQQV…HDCAIVYGHK (103 aa). ATP is bound by residues 180 to 181, 205 to 206, Arg-264, Gly-286, and Gln-295; these read LL and TF.

It belongs to the ThiI family.

The protein resides in the cytoplasm. It catalyses the reaction [ThiI sulfur-carrier protein]-S-sulfanyl-L-cysteine + a uridine in tRNA + 2 reduced [2Fe-2S]-[ferredoxin] + ATP + H(+) = [ThiI sulfur-carrier protein]-L-cysteine + a 4-thiouridine in tRNA + 2 oxidized [2Fe-2S]-[ferredoxin] + AMP + diphosphate. It carries out the reaction [ThiS sulfur-carrier protein]-C-terminal Gly-Gly-AMP + S-sulfanyl-L-cysteinyl-[cysteine desulfurase] + AH2 = [ThiS sulfur-carrier protein]-C-terminal-Gly-aminoethanethioate + L-cysteinyl-[cysteine desulfurase] + A + AMP + 2 H(+). Its pathway is cofactor biosynthesis; thiamine diphosphate biosynthesis. In terms of biological role, catalyzes the ATP-dependent transfer of a sulfur to tRNA to produce 4-thiouridine in position 8 of tRNAs, which functions as a near-UV photosensor. Also catalyzes the transfer of sulfur to the sulfur carrier protein ThiS, forming ThiS-thiocarboxylate. This is a step in the synthesis of thiazole, in the thiamine biosynthesis pathway. The sulfur is donated as persulfide by IscS. The chain is Probable tRNA sulfurtransferase from Ureaplasma urealyticum serovar 10 (strain ATCC 33699 / Western).